Consider the following 154-residue polypeptide: U1 small nuclear ribonucleoprotein C (154 aa).

The Matrin-type zinc-finger motif lies at 4–36 (YYCDYCDTYLTHDSPSVRKTHCTGRKHKDNVKF).

Belongs to the U1 small nuclear ribonucleoprotein C family. As to quaternary structure, U1 snRNP is composed of the 7 core Sm proteins B/B', D1, D2, D3, E, F and G that assemble in a heptameric protein ring on the Sm site of the small nuclear RNA to form the core snRNP, and at least 3 U1 snRNP-specific proteins U1-70K, U1-A and U1-C. U1-C interacts with U1 snRNA and the 5' splice-site region of the pre-mRNA.

The protein localises to the nucleus. Its function is as follows. Component of the spliceosomal U1 snRNP, which is essential for recognition of the pre-mRNA 5' splice-site and the subsequent assembly of the spliceosome. U1-C is directly involved in initial 5' splice-site recognition for both constitutive and regulated alternative splicing. The interaction with the 5' splice-site seems to precede base-pairing between the pre-mRNA and the U1 snRNA. Stimulates commitment or early (E) complex formation by stabilizing the base pairing of the 5' end of the U1 snRNA and the 5' splice-site region. This Aedes aegypti (Yellowfever mosquito) protein is U1 small nuclear ribonucleoprotein C.